The chain runs to 143 residues: 3-dehydroquinate dehydratase (143 aa).

The Proton acceptor role is filled by tyrosine 22. Substrate is bound by residues asparagine 73, histidine 79, and aspartate 86. Histidine 99 serves as the catalytic Proton donor. Substrate is bound by residues isoleucine 100–serine 101 and arginine 110.

It belongs to the type-II 3-dehydroquinase family. Homododecamer.

It carries out the reaction 3-dehydroquinate = 3-dehydroshikimate + H2O. It functions in the pathway metabolic intermediate biosynthesis; chorismate biosynthesis; chorismate from D-erythrose 4-phosphate and phosphoenolpyruvate: step 3/7. In terms of biological role, catalyzes a trans-dehydration via an enolate intermediate. This is 3-dehydroquinate dehydratase from Salinispora arenicola (strain CNS-205).